A 141-amino-acid chain; its full sequence is MAKKVENIVKLQIPAGKATPAPPVGPALGQAGINIMGFTKEFNARTADQAGMIIPVVISVYEDKSFDFITKTPPAAVLLKKAAGVEKGSGTPNSVKVASVTRAQVREIAETKMPDLNAANIESAMRMIEGTARSMGFTVTD.

This sequence belongs to the universal ribosomal protein uL11 family. In terms of assembly, part of the ribosomal stalk of the 50S ribosomal subunit. Interacts with L10 and the large rRNA to form the base of the stalk. L10 forms an elongated spine to which L12 dimers bind in a sequential fashion forming a multimeric L10(L12)X complex. Post-translationally, one or more lysine residues are methylated.

In terms of biological role, forms part of the ribosomal stalk which helps the ribosome interact with GTP-bound translation factors. The polypeptide is Large ribosomal subunit protein uL11 (Streptococcus thermophilus (strain CNRZ 1066)).